A 187-amino-acid chain; its full sequence is ATP synthase subunit b (187 aa).

The chain crosses the membrane as a helical span at residues 4–24; that stretch reads LALFALLMVPAILLASGHDSG.

The protein belongs to the ATPase B chain family. As to quaternary structure, F-type ATPases have 2 components, F(1) - the catalytic core - and F(0) - the membrane proton channel. F(1) has five subunits: alpha(3), beta(3), gamma(1), delta(1), epsilon(1). F(0) has three main subunits: a(1), b(2) and c(10-14). The alpha and beta chains form an alternating ring which encloses part of the gamma chain. F(1) is attached to F(0) by a central stalk formed by the gamma and epsilon chains, while a peripheral stalk is formed by the delta and b chains.

It localises to the cell inner membrane. F(1)F(0) ATP synthase produces ATP from ADP in the presence of a proton or sodium gradient. F-type ATPases consist of two structural domains, F(1) containing the extramembraneous catalytic core and F(0) containing the membrane proton channel, linked together by a central stalk and a peripheral stalk. During catalysis, ATP synthesis in the catalytic domain of F(1) is coupled via a rotary mechanism of the central stalk subunits to proton translocation. In terms of biological role, component of the F(0) channel, it forms part of the peripheral stalk, linking F(1) to F(0). This chain is ATP synthase subunit b, found in Sulfurovum sp. (strain NBC37-1).